We begin with the raw amino-acid sequence, 228 residues long: Pyridoxal phosphate homeostasis protein (228 aa).

Lys35 carries the post-translational modification N6-(pyridoxal phosphate)lysine.

It belongs to the pyridoxal phosphate-binding protein YggS/PROSC family.

In terms of biological role, pyridoxal 5'-phosphate (PLP)-binding protein, which is involved in PLP homeostasis. In Aquifex aeolicus (strain VF5), this protein is Pyridoxal phosphate homeostasis protein.